The primary structure comprises 236 residues: 7-cyano-7-deazaguanine synthase (236 aa).

7 to 17 is a binding site for ATP; the sequence is CSGGLDSVSLA. Zn(2+) contacts are provided by Cys185, Cys193, Cys196, and Cys199.

It belongs to the QueC family. Requires Zn(2+) as cofactor.

It catalyses the reaction 7-carboxy-7-deazaguanine + NH4(+) + ATP = 7-cyano-7-deazaguanine + ADP + phosphate + H2O + H(+). Its pathway is purine metabolism; 7-cyano-7-deazaguanine biosynthesis. In terms of biological role, catalyzes the ATP-dependent conversion of 7-carboxy-7-deazaguanine (CDG) to 7-cyano-7-deazaguanine (preQ(0)). The polypeptide is 7-cyano-7-deazaguanine synthase (Sinorhizobium fredii (strain NBRC 101917 / NGR234)).